A 254-amino-acid polypeptide reads, in one-letter code: 3-deoxy-manno-octulosonate cytidylyltransferase (254 aa).

The protein belongs to the KdsB family.

The protein localises to the cytoplasm. The enzyme catalyses 3-deoxy-alpha-D-manno-oct-2-ulosonate + CTP = CMP-3-deoxy-beta-D-manno-octulosonate + diphosphate. The protein operates within nucleotide-sugar biosynthesis; CMP-3-deoxy-D-manno-octulosonate biosynthesis; CMP-3-deoxy-D-manno-octulosonate from 3-deoxy-D-manno-octulosonate and CTP: step 1/1. Its pathway is bacterial outer membrane biogenesis; lipopolysaccharide biosynthesis. Its function is as follows. Activates KDO (a required 8-carbon sugar) for incorporation into bacterial lipopolysaccharide in Gram-negative bacteria. This chain is 3-deoxy-manno-octulosonate cytidylyltransferase, found in Pseudomonas putida (strain GB-1).